Reading from the N-terminus, the 70-residue chain is Small ribosomal subunit protein bS21B (70 aa).

The protein belongs to the bacterial ribosomal protein bS21 family.

This chain is Small ribosomal subunit protein bS21B (rpsU2), found in Rhizobium meliloti (strain 1021) (Ensifer meliloti).